The primary structure comprises 104 residues: uncharacterized protein (104 aa).

The HIT domain maps to 3-104 (VFEKIIQGEI…HFHILSGDKH (102 aa)). Residues 93 to 97 (HLHFH) carry the Histidine triad motif motif.

This is an uncharacterized protein from Helicobacter pylori (strain J99 / ATCC 700824) (Campylobacter pylori J99).